A 200-amino-acid polypeptide reads, in one-letter code: dITP/XTP pyrophosphatase (200 aa).

5–10 (TRNEGK) is a binding site for substrate. Asp-67 (proton acceptor) is an active-site residue. A Mg(2+)-binding site is contributed by Asp-67. Residues Ser-68, 151–154 (FGYD), Lys-174, and 179–180 (HR) each bind substrate.

Belongs to the HAM1 NTPase family. In terms of assembly, homodimer. It depends on Mg(2+) as a cofactor.

The catalysed reaction is XTP + H2O = XMP + diphosphate + H(+). The enzyme catalyses dITP + H2O = dIMP + diphosphate + H(+). It catalyses the reaction ITP + H2O = IMP + diphosphate + H(+). Its function is as follows. Pyrophosphatase that catalyzes the hydrolysis of nucleoside triphosphates to their monophosphate derivatives, with a high preference for the non-canonical purine nucleotides XTP (xanthosine triphosphate), dITP (deoxyinosine triphosphate) and ITP. Seems to function as a house-cleaning enzyme that removes non-canonical purine nucleotides from the nucleotide pool, thus preventing their incorporation into DNA/RNA and avoiding chromosomal lesions. The polypeptide is dITP/XTP pyrophosphatase (Streptococcus pneumoniae serotype 4 (strain ATCC BAA-334 / TIGR4)).